The sequence spans 302 residues: Dihydroorotate dehydrogenase B (NAD(+)), catalytic subunit (302 aa).

FMN-binding positions include Ser23 and 47–48 (KS). Residues Lys47, 71 to 75 (NAMGL), and Asn125 each bind substrate. Asn125 provides a ligand contact to FMN. The Nucleophile role is filled by Cys128. FMN-binding residues include Lys163 and Ile189. A substrate-binding site is contributed by 190–191 (NT). FMN is bound by residues Gly215, 241–242 (GG), and 263–264 (GT).

This sequence belongs to the dihydroorotate dehydrogenase family. Type 1 subfamily. In terms of assembly, heterotetramer of 2 PyrK and 2 PyrD type B subunits. The cofactor is FMN.

Its subcellular location is the cytoplasm. It catalyses the reaction (S)-dihydroorotate + NAD(+) = orotate + NADH + H(+). Its pathway is pyrimidine metabolism; UMP biosynthesis via de novo pathway; orotate from (S)-dihydroorotate (NAD(+) route): step 1/1. Functionally, catalyzes the conversion of dihydroorotate to orotate with NAD(+) as electron acceptor. The chain is Dihydroorotate dehydrogenase B (NAD(+)), catalytic subunit (pyrD) from Thermococcus kodakarensis (strain ATCC BAA-918 / JCM 12380 / KOD1) (Pyrococcus kodakaraensis (strain KOD1)).